A 127-amino-acid chain; its full sequence is Lysozyme C (127 aa).

The C-type lysozyme domain occupies 1–127; it reads KDIPRCELVK…KDLSSYVRGC (127 aa). 4 disulfide bridges follow: Cys-6–Cys-127, Cys-30–Cys-115, Cys-64–Cys-80, and Cys-76–Cys-94. Catalysis depends on residues Glu-35 and Asp-52. Ca(2+) contacts are provided by Lys-82, Asp-85, Asn-87, Asp-90, and Asp-91.

It belongs to the glycosyl hydrolase 22 family. In terms of assembly, monomer. Requires Ca(2+) as cofactor.

Its subcellular location is the secreted. It carries out the reaction Hydrolysis of (1-&gt;4)-beta-linkages between N-acetylmuramic acid and N-acetyl-D-glucosamine residues in a peptidoglycan and between N-acetyl-D-glucosamine residues in chitodextrins.. Its function is as follows. Lysozymes have primarily a bacteriolytic function; those in tissues and body fluids are associated with the monocyte-macrophage system and enhance the activity of immunoagents. This is Lysozyme C (LYZ) from Columba livia (Rock dove).